The chain runs to 419 residues: 3-isopropylmalate dehydratase large subunit (419 aa).

Positions 302, 362, and 365 each coordinate [4Fe-4S] cluster.

The protein belongs to the aconitase/IPM isomerase family. LeuC type 2 subfamily. As to quaternary structure, heterodimer of LeuC and LeuD. The cofactor is [4Fe-4S] cluster.

The enzyme catalyses (2R,3S)-3-isopropylmalate = (2S)-2-isopropylmalate. It participates in amino-acid biosynthesis; L-leucine biosynthesis; L-leucine from 3-methyl-2-oxobutanoate: step 2/4. Catalyzes the isomerization between 2-isopropylmalate and 3-isopropylmalate, via the formation of 2-isopropylmaleate. The protein is 3-isopropylmalate dehydratase large subunit of Sulfurimonas denitrificans (strain ATCC 33889 / DSM 1251) (Thiomicrospira denitrificans (strain ATCC 33889 / DSM 1251)).